Consider the following 148-residue polypeptide: Large ribosomal subunit protein uL13 (148 aa).

This sequence belongs to the universal ribosomal protein uL13 family. Part of the 50S ribosomal subunit.

Functionally, this protein is one of the early assembly proteins of the 50S ribosomal subunit, although it is not seen to bind rRNA by itself. It is important during the early stages of 50S assembly. This is Large ribosomal subunit protein uL13 from Ureaplasma urealyticum serovar 10 (strain ATCC 33699 / Western).